The primary structure comprises 483 residues: PAT complex subunit CCDC47 (483 aa).

Residues 1–20 (MKAFYAFCVVLLVFGSVSEA) form the signal peptide. The Cytoplasmic portion of the chain corresponds to 21-135 (KFDDFEDEED…PAHLQNSWES (115 aa)). The tract at residues 46–119 (MEDSVTESPQ…DTSSNKNKDP (74 aa)) is disordered. The segment covering 60 to 104 (TEDDEDEATVELEGQDESQEGDFEDADTQEGDTESEPYDDEEFEG) has biased composition (acidic residues). Over residues 105–118 (YEDKPDTSSNKNKD) the composition is skewed to basic and acidic residues. Residues 136-156 (YYLEILMVTGLLAYIMNYIIG) traverse the membrane as a helical segment. Residues 157-483 (KNKNSRLAQA…KMKQIKVKAM (327 aa)) lie on the Lumenal side of the membrane. Asparagine 178 carries N-linked (GlcNAc...) asparagine glycosylation. The disordered stretch occupies residues 424–483 (QRQEAAQSRREEKKRAEKERIMNEEDPEKQRRLEEAALRREQKKLEKKQMKMKQIKVKAM). Positions 430–472 (QSRREEKKRAEKERIMNEEDPEKQRRLEEAALRREQKKLEKKQ) are enriched in basic and acidic residues. The stretch at 450–483 (PEKQRRLEEAALRREQKKLEKKQMKMKQIKVKAM) forms a coiled coil. Residues 473 to 483 (MKMKQIKVKAM) are compositionally biased toward basic residues.

It belongs to the CCDC47 family. As to quaternary structure, component of the PAT complex, composed of WDR83OS/Asterix and CCDC47. The PAT complex is part of the multi-pass translocon (MPT) complex, composed of three subcomplexes, the GEL complex (composed of RAB5IF/OPTI and TMCO1), the BOS complex (composed of NCLN/Nicalin, NOMO1 and TMEM147) and the PAT complex (composed of WDR83OS/Asterix and CCDC47). The MPT complex associates with the SEC61 complex. Interacts with VCP, HSPA5, DERL1, DERL2 and SELENOS. In the embryo, expressed in the endodermal layer of the yolk sac and in the small intestine.

The protein localises to the endoplasmic reticulum membrane. It is found in the rough endoplasmic reticulum membrane. Functionally, component of the multi-pass translocon (MPT) complex that mediates insertion of multi-pass membrane proteins into the lipid bilayer of membranes. The MPT complex takes over after the SEC61 complex: following membrane insertion of the first few transmembrane segments of proteins by the SEC61 complex, the MPT complex occludes the lateral gate of the SEC61 complex to promote insertion of subsequent transmembrane regions. Within the MPT complex, the PAT subcomplex sequesters any highly polar regions in the transmembrane domains away from the non-polar membrane environment until they can be buried in the interior of the fully assembled protein. Within the PAT subcomplex, CCDC47 occludes the lateral gate of the SEC61 complex. Involved in the regulation of calcium ion homeostasis in the ER. Required for proper protein degradation via the ERAD (ER-associated degradation) pathway. Has an essential role in the maintenance of ER organization during embryogenesis. This Mus musculus (Mouse) protein is PAT complex subunit CCDC47.